The primary structure comprises 251 residues: L-ascorbate peroxidase 2, cytosolic (251 aa).

Catalysis depends on histidine 43, which acts as the Proton acceptor. Residues 113 to 137 (EVPFHPGRQDKPEPPPEGRLPDATQ) form a disordered region. Over residues 119–132 (GRQDKPEPPPEGRL) the composition is skewed to basic and acidic residues. Position 164 (histidine 164) interacts with heme b. Residues threonine 165, threonine 181, asparagine 183, isoleucine 186, and aspartate 188 each coordinate K(+).

This sequence belongs to the peroxidase family. Ascorbate peroxidase subfamily. Heme b serves as cofactor. In terms of tissue distribution, expressed in aerial vegetative parts and reproductive organs. Expressed in roots, leaves, stems and flowers. Expressed in young leaves, internodes, blade ears, stems and anthers.

The protein localises to the cytoplasm. It carries out the reaction L-ascorbate + H2O2 = L-dehydroascorbate + 2 H2O. Its activity is regulated as follows. Inhibited by p-chloromercuriphenylsulfonic acid (CMPSA). Its function is as follows. Plays a key role in hydrogen peroxide removal. Plays an important role in plant growth and development by protecting the seedlings from abiotic stresses through scavenging reactive oxygen species. Required for pollen viability. The chain is L-ascorbate peroxidase 2, cytosolic from Oryza sativa subsp. japonica (Rice).